Here is a 155-residue protein sequence, read N- to C-terminus: Ribosomal RNA large subunit methyltransferase H (155 aa).

Gly103 lines the S-adenosyl-L-methionine pocket.

This sequence belongs to the RNA methyltransferase RlmH family. Homodimer.

The protein localises to the cytoplasm. The enzyme catalyses pseudouridine(1915) in 23S rRNA + S-adenosyl-L-methionine = N(3)-methylpseudouridine(1915) in 23S rRNA + S-adenosyl-L-homocysteine + H(+). In terms of biological role, specifically methylates the pseudouridine at position 1915 (m3Psi1915) in 23S rRNA. The polypeptide is Ribosomal RNA large subunit methyltransferase H (Caulobacter vibrioides (strain ATCC 19089 / CIP 103742 / CB 15) (Caulobacter crescentus)).